A 174-amino-acid chain; its full sequence is UPF0316 protein lin1888 (174 aa).

A run of 3 helical transmembrane segments spans residues 4-24 (GIFIVATIFVVNILYVTIYTV), 36-56 (LAALSSVFEMIIYVVALSLVL), and 62-82 (IANVLAYAVGFGVGIIVGMKI).

Belongs to the UPF0316 family.

It is found in the cell membrane. The protein is UPF0316 protein lin1888 of Listeria innocua serovar 6a (strain ATCC BAA-680 / CLIP 11262).